Consider the following 180-residue polypeptide: Flavin prenyltransferase UbiX (180 aa).

FMN-binding positions include 9-11 (GAS), Ser33, 84-87 (SITT), and Arg119. 2 residues coordinate dimethylallyl phosphate: Tyr149 and Arg165.

The protein belongs to the UbiX/PAD1 family.

The catalysed reaction is dimethylallyl phosphate + FMNH2 = prenylated FMNH2 + phosphate. In terms of biological role, flavin prenyltransferase that catalyzes the synthesis of the prenylated FMN cofactor (prenyl-FMN) for 4-hydroxy-3-polyprenylbenzoic acid decarboxylase UbiD. The prenyltransferase is metal-independent and links a dimethylallyl moiety from dimethylallyl monophosphate (DMAP) to the flavin N5 and C6 atoms of FMN. The chain is Flavin prenyltransferase UbiX from Thermoplasma acidophilum (strain ATCC 25905 / DSM 1728 / JCM 9062 / NBRC 15155 / AMRC-C165).